Consider the following 735-residue polypeptide: F-box and leucine-rich repeat protein 13 (735 aa).

Residues 152-198 (KCDISLLPERAILQIFFYLSLKDVIICGQVNHAWMLMTQLNSLWNAI) form the F-box domain. LRR repeat units lie at residues 230 to 254 (GCLL…NVSD), 255 to 280 (CPTF…NLSN), 281 to 305 (TTIT…SLAY), 306 to 333 (CRRF…DLSG), 334 to 359 (CTQI…TIND), 360 to 385 (MPTL…VFTG), 386 to 406 (APHI…RKIR), 410 to 435 (NKRV…YMAD), 436 to 460 (CKGI…NLAN), 461 to 488 (CVRI…NLSN), 489 to 514 (CVRL…SLRN), 515 to 538 (CEHL…IDLS), 539 to 563 (GTDI…SVSE), 564 to 589 (CYRI…DVSY), 590 to 615 (CSQL…SIAG), 616 to 641 (CPKI…DISG), and 642 to 667 (CVLL…KMQY). A compositionally biased stretch (polar residues) spans 682–692 (KVQQQEYNTND). Residues 682–703 (KVQQQEYNTNDPPRWFGYDREG) form a disordered region.

Belongs to the DRC6 family. As to quaternary structure, component of the nexin-dynein regulatory complex (N-DRC). Directly interacts with SKP1 and CUL1. Interacts with TCTE1/DRC5.

It is found in the cytoplasm. The protein localises to the cytoskeleton. It localises to the flagellum axoneme. Its subcellular location is the microtubule organizing center. The protein resides in the centrosome. In terms of biological role, substrate-recognition component of the SCF (SKP1-CUL1-F-box protein)-type E3 ubiquitin ligase complex. Component of the nexin-dynein regulatory complex (N-DRC), a key regulator of ciliary/flagellar motility which maintains the alignment and integrity of the distal axoneme and regulates microtubule sliding in motile axonemes. Specifically targets CEP192 isoform 3 for ubiquitin-mediated proteolysis and thereby acts as a regulator of microtubule nucleation activity. This chain is F-box and leucine-rich repeat protein 13 (FBXL13), found in Homo sapiens (Human).